Reading from the N-terminus, the 315-residue chain is Lipoyl synthase (315 aa).

Residues cysteine 62, cysteine 67, cysteine 73, cysteine 88, cysteine 92, cysteine 95, and serine 302 each coordinate [4Fe-4S] cluster. The Radical SAM core domain maps to 74–291 (FGKGTATFMI…ETEALRMGFR (218 aa)).

It belongs to the radical SAM superfamily. Lipoyl synthase family. [4Fe-4S] cluster is required as a cofactor.

It localises to the cytoplasm. The enzyme catalyses [[Fe-S] cluster scaffold protein carrying a second [4Fe-4S](2+) cluster] + N(6)-octanoyl-L-lysyl-[protein] + 2 oxidized [2Fe-2S]-[ferredoxin] + 2 S-adenosyl-L-methionine + 4 H(+) = [[Fe-S] cluster scaffold protein] + N(6)-[(R)-dihydrolipoyl]-L-lysyl-[protein] + 4 Fe(3+) + 2 hydrogen sulfide + 2 5'-deoxyadenosine + 2 L-methionine + 2 reduced [2Fe-2S]-[ferredoxin]. It participates in protein modification; protein lipoylation via endogenous pathway; protein N(6)-(lipoyl)lysine from octanoyl-[acyl-carrier-protein]: step 2/2. Its function is as follows. Catalyzes the radical-mediated insertion of two sulfur atoms into the C-6 and C-8 positions of the octanoyl moiety bound to the lipoyl domains of lipoate-dependent enzymes, thereby converting the octanoylated domains into lipoylated derivatives. This chain is Lipoyl synthase, found in Azoarcus sp. (strain BH72).